Here is a 529-residue protein sequence, read N- to C-terminus: Type I restriction enzyme StySPI methylase subunit (529 aa).

S-adenosyl-L-methionine-binding positions include 148 to 153 (QYFTPR), 178 to 180 (TAG), and E216. A disordered region spans residues 424 to 443 (AEESEVADSEENKNADQHQA).

This sequence belongs to the N(4)/N(6)-methyltransferase family. As to quaternary structure, the type I restriction/modification system is composed of three polypeptides R, M and S; the restriction enzyme has stoichiometry R(2)M(2)S(1) while the methyltransferase is M(2)S(1).

It catalyses the reaction a 2'-deoxyadenosine in DNA + S-adenosyl-L-methionine = an N(6)-methyl-2'-deoxyadenosine in DNA + S-adenosyl-L-homocysteine + H(+). Functionally, the subtype gamma methyltransferase (M) subunit of a type I restriction enzyme. The M and S subunits together form a methyltransferase (MTase) that methylates A-2 on the top strand and A-3 on the bottom strand of the sequence 5'-AACN(6)GTRC-3'. In the presence of the R subunit the complex can also act as an endonuclease, binding to the same target sequence but cutting the DNA some distance from this site. Whether the DNA is cut or modified depends on the methylation state of the target sequence. When the target site is unmodified, the DNA is cut. When the target site is hemimethylated, the complex acts as a maintenance MTase modifying the DNA so that both strands become methylated. After locating a non-methylated recognition site, the enzyme complex serves as a molecular motor that translocates DNA in an ATP-dependent manner until a collision occurs that triggers cleavage. In Salmonella potsdam, this protein is Type I restriction enzyme StySPI methylase subunit.